A 184-amino-acid polypeptide reads, in one-letter code: Thymidine kinase (184 aa).

Residues 10–17 (GPMYSGKT), histidine 53, and 83–86 (DEVQ) contribute to the ATP site. Catalysis depends on glutamate 84, which acts as the Proton acceptor. Residue histidine 115 participates in substrate binding. Zn(2+) is bound by residues cysteine 140 and cysteine 143. Residues 161-164 (IDVG) and tyrosine 169 each bind substrate. Cysteine 173 and cysteine 176 together coordinate Zn(2+).

This sequence belongs to the thymidine kinase family. In terms of assembly, homotetramer.

It localises to the cytoplasm. The catalysed reaction is thymidine + ATP = dTMP + ADP + H(+). This Thermotoga maritima (strain ATCC 43589 / DSM 3109 / JCM 10099 / NBRC 100826 / MSB8) protein is Thymidine kinase (tdk).